A 216-amino-acid chain; its full sequence is Urease accessory protein UreG (216 aa).

Residue 25–32 participates in GTP binding; that stretch reads GPVGSGKT.

This sequence belongs to the SIMIBI class G3E GTPase family. UreG subfamily. Homodimer. UreD, UreF and UreG form a complex that acts as a GTP-hydrolysis-dependent molecular chaperone, activating the urease apoprotein by helping to assemble the nickel containing metallocenter of UreC. The UreE protein probably delivers the nickel.

The protein localises to the cytoplasm. Functionally, facilitates the functional incorporation of the urease nickel metallocenter. This process requires GTP hydrolysis, probably effectuated by UreG. The chain is Urease accessory protein UreG from Burkholderia thailandensis (strain ATCC 700388 / DSM 13276 / CCUG 48851 / CIP 106301 / E264).